A 737-amino-acid polypeptide reads, in one-letter code: DNA topoisomerase 4 subunit A (737 aa).

The Topo IIA-type catalytic domain occupies 32-496 (LPDVRDGLKP…SFEEVTLTNQ (465 aa)). Residue tyrosine 120 is the O-(5'-phospho-DNA)-tyrosine intermediate of the active site.

It belongs to the type II topoisomerase GyrA/ParC subunit family. ParC type 1 subfamily. In terms of assembly, heterotetramer composed of ParC and ParE.

It localises to the cell membrane. The catalysed reaction is ATP-dependent breakage, passage and rejoining of double-stranded DNA.. Functionally, topoisomerase IV is essential for chromosome segregation. It relaxes supercoiled DNA. Performs the decatenation events required during the replication of a circular DNA molecule. This is DNA topoisomerase 4 subunit A from Rickettsia felis (strain ATCC VR-1525 / URRWXCal2) (Rickettsia azadi).